The primary structure comprises 167 residues: Lipoprotein signal peptidase (167 aa).

Transmembrane regions (helical) follow at residues 7-27 (LFLL…KYWV), 61-81 (FSHW…LWLW), and 87-107 (NKFL…GNLI). Residues aspartate 117 and aspartate 136 contribute to the active site. Residues 126–146 (IFYFAIFNLADSFITLGVIVI) form a helical membrane-spanning segment.

The protein belongs to the peptidase A8 family.

It localises to the cell inner membrane. It catalyses the reaction Release of signal peptides from bacterial membrane prolipoproteins. Hydrolyzes -Xaa-Yaa-Zaa-|-(S,diacylglyceryl)Cys-, in which Xaa is hydrophobic (preferably Leu), and Yaa (Ala or Ser) and Zaa (Gly or Ala) have small, neutral side chains.. It functions in the pathway protein modification; lipoprotein biosynthesis (signal peptide cleavage). Functionally, this protein specifically catalyzes the removal of signal peptides from prolipoproteins. The chain is Lipoprotein signal peptidase from Bartonella tribocorum (strain CIP 105476 / IBS 506).